The chain runs to 327 residues: Probable cell division protein WhiA (327 aa).

Residues 275-308 (SLEELGRLADPQMTKDAVAGRIRRLLTMADKRAE) constitute a DNA-binding region (H-T-H motif).

The protein belongs to the WhiA family.

Functionally, involved in cell division and chromosome segregation. The sequence is that of Probable cell division protein WhiA from Corynebacterium glutamicum (strain R).